The following is a 142-amino-acid chain: Small ribosomal subunit protein uS12 (142 aa).

This sequence belongs to the universal ribosomal protein uS12 family.

This Tetrahymena thermophila protein is Small ribosomal subunit protein uS12.